The chain runs to 622 residues: Low affinity potassium transport system protein Kup (622 aa).

Transmembrane regions (helical) follow at residues 9–29 (LSAV…TSPL), 46–66 (PDVV…VVSV), 101–121 (ILVV…VITP), 137–157 (PALD…LFVI), 165–185 (VGKL…LLGL), 213–233 (VSFF…ALYA), 247–267 (WFTV…ALLL), 276–296 (PFFL…ATLA), 337–357 (IYIP…IIGF), 363–383 (LAAA…ILFC), 395–415 (FLVV…FSAN), and 416–436 (VLKL…MFII).

This sequence belongs to the HAK/KUP transporter (TC 2.A.72) family.

The protein resides in the cell inner membrane. It carries out the reaction K(+)(in) + H(+)(in) = K(+)(out) + H(+)(out). Responsible for the low-affinity transport of potassium into the cell. Likely operates as a K(+):H(+) symporter. The sequence is that of Low affinity potassium transport system protein Kup from Yersinia pestis bv. Antiqua (strain Antiqua).